A 230-amino-acid polypeptide reads, in one-letter code: Large ribosomal subunit protein uL1 (230 aa).

It belongs to the universal ribosomal protein uL1 family. In terms of assembly, part of the 50S ribosomal subunit.

In terms of biological role, binds directly to 23S rRNA. The L1 stalk is quite mobile in the ribosome, and is involved in E site tRNA release. Functionally, protein L1 is also a translational repressor protein, it controls the translation of the L11 operon by binding to its mRNA. This is Large ribosomal subunit protein uL1 from Nitrosomonas europaea (strain ATCC 19718 / CIP 103999 / KCTC 2705 / NBRC 14298).